The following is a 282-amino-acid chain: Probable transcription factor At1g66420 (282 aa).

Residues 33 to 73 (SKKNEEFCGGSGKVQPSEMKRRSEGTSTDMTSKRAKKVSAE) form a disordered region.

Belongs to the GeBP family.

In Arabidopsis thaliana (Mouse-ear cress), this protein is Probable transcription factor At1g66420.